Here is a 675-residue protein sequence, read N- to C-terminus: PTS system glucose-specific EIICBA component (675 aa).

The PTS EIIC type-1 domain maps to 3–414 (KKLFGQLQRI…FNFKTPGRED (412 aa)). 11 consecutive transmembrane segments (helical) span residues 16-36 (LMLP…GTAF), 59-79 (MMTG…ALGV), 81-101 (IGLA…FIIM), 126-146 (VLGI…GALA), 173-193 (IMMA…WPFI), 199-219 (AFST…FGFI), 273-293 (FMQG…LAIY), 303-323 (VVGG…ITEP), 328-348 (FLFV…LSFL), 355-375 (LHLG…GILP), and 378-398 (TPWW…YVVF). The region spanning 425–506 (SKLPFDVLDA…ARIMNGDITK (82 aa)) is the PTS EIIB type-1 domain. Residue Cys-447 is the Phosphocysteine intermediate; for EIIB activity of the active site. The 105-residue stretch at 547 to 651 (DKVFSEKMMG…SVVTPVIITN (105 aa)) folds into the PTS EIIA type-1 domain. The active-site Tele-phosphohistidine intermediate; for EIIA activity is His-599.

The protein localises to the cell membrane. It carries out the reaction N(pros)-phospho-L-histidyl-[protein] + D-glucose(out) = D-glucose 6-phosphate(in) + L-histidyl-[protein]. Functionally, the phosphoenolpyruvate-dependent sugar phosphotransferase system (sugar PTS), a major carbohydrate active transport system, catalyzes the phosphorylation of incoming sugar substrates concomitantly with their translocation across the cell membrane. This system is involved in glucose transport. This chain is PTS system glucose-specific EIICBA component (ptsG), found in Staphylococcus haemolyticus (strain JCSC1435).